Consider the following 1183-residue polypeptide: MAAILLPQRFRGEAPVTEKTTPSWASKRLTPIAQFLSRLACSHPIHTVVVVAVLASTSYVGLLQESLFNTDVESATLGKADWSTLVEGSRVLRAGPETAWNWKAVEQDVVADAGSDADHLALLTLVFPDSLSAESSSTAPRSHHVPIPQNLSITSLPSTENPFTAYSQDSILAYALPYSEGPEFLAAAQEIPNEDAVEIETKHGREKKTWIMKAAKVNTRNSVVQWVSNAWSEFLDLLKNAETLDIVIMLLGYIAMHLTFVSLFLSMRKMGSKFWLGICTLFSSVFAFLFGLVVTTKLGVPISVILLSEGLPFLVVTIGFEKNIVLTRAVMSHAIEHRRIQAQNSKSGKRSPERSTQNMIQYAVQAAIKEKGFEIIRDYAIEIVILVIGAASGVQGGLQQFCFLAAWTLFFDFILLFTFYTAILSIKLEINRIKRHVDMRMALEDDGVSRRVAENVAKGDDELNRVRGDAPLFGRKSSSIPKFKVLMILGFIFVNIVNICSIPFRNPSSMSTIRTWASSLGGVIAPLSVDPFKVASNGLDAILATAKSNNRPTLVTVLTPIKYELEYPSIHYALGSAASNPAYNDAFHHHFQGYGVGGRMVGGILKSLEDPVLSKWIVIALALSVALNGYLFNVARWGIKDPNVPEHNIDRNELARAQQFNDTGSATLPLGEYVPPTPMRTQPSTPAITDDEAEGLHMTKARPANLPNRSNEELEKLLSEKRVREMTDEEVISLSMRGKIPGYALEKTLGDFTRAVKIRRSIIARNKATTDITHSLDRSKLPYENYNWERVFGACCENVIGYMPLPVGVAGPLVIDGQSYFIPMATTEGVLVASASRGCKAINSGGGAITVLTADGMTRGPCVAFETLERAGAAKLWLDSEAGQDMMKKAFNSTSRFARLQSMKTALAGTNLYIRFKTTTGDAMGMNMISKGVEHALSVMANDGGFDDMQIISVSGNYCTDKKAAALNWIDGRGKGVVAEAIIPGEVVRSVLKSDVDSLVELNVAKNLIGSAMAGSVGGFNAHAANIVAAIFLATGQDPAQVVESANCITIMKNLNGALQISVSMPSLEVGTLGGGTILEPQGAMLDILGVRGSHPTNPGDNARRLARIIGAAVLAGELSLCSALAAGHLVRAHMQHNRSAAPSRSTTPAPPMTPVSLAMTSAQERSASTTSMSAAAIQRSKR.

At 1 to 245 the chain is on the cytoplasmic side; the sequence is MAAILLPQRF…DLLKNAETLD (245 aa). The SSD domain maps to 245–426; the sequence is DIVIMLLGYI…FTFYTAILSI (182 aa). The helical transmembrane segment at 246-266 threads the bilayer; that stretch reads IVIMLLGYIAMHLTFVSLFLS. Over 267 to 273 the chain is Lumenal; it reads MRKMGSK. Residues 274-294 traverse the membrane as a helical segment; that stretch reads FWLGICTLFSSVFAFLFGLVV. The Cytoplasmic segment spans residues 295 to 299; the sequence is TTKLG. The helical transmembrane segment at 300–320 threads the bilayer; sequence VPISVILLSEGLPFLVVTIGF. Residues 321-378 are Lumenal-facing; the sequence is EKNIVLTRAVMSHAIEHRRIQAQNSKSGKRSPERSTQNMIQYAVQAAIKEKGFEIIRD. The helical transmembrane segment at 379 to 399 threads the bilayer; that stretch reads YAIEIVILVIGAASGVQGGLQ. The Cytoplasmic segment spans residues 400–402; that stretch reads QFC. Residues 403–423 form a helical membrane-spanning segment; it reads FLAAWTLFFDFILLFTFYTAI. Over 424 to 482 the chain is Lumenal; the sequence is LSIKLEINRIKRHVDMRMALEDDGVSRRVAENVAKGDDELNRVRGDAPLFGRKSSSIPK. Residues 483 to 503 form a helical membrane-spanning segment; it reads FKVLMILGFIFVNIVNICSIP. Residues 504 to 1183 are Cytoplasmic-facing; it reads FRNPSSMSTI…SAAAIQRSKR (680 aa). E828 acts as the Charge relay system in catalysis. 834 to 840 provides a ligand contact to CoA; the sequence is SASRGCK. Residues 895–897 and 922–930 each bind NADP(+); these read SRF and DAMGMNMIS. K962 (charge relay system) is an active-site residue. 991 to 993 is a CoA binding site; that stretch reads VLK. D1038 acts as the Charge relay system in catalysis. A CoA-binding site is contributed by 1133–1134; sequence AH. H1134 functions as the Proton donor in the catalytic mechanism. The segment at 1136–1183 is disordered; sequence QHNRSAAPSRSTTPAPPMTPVSLAMTSAQERSASTTSMSAAAIQRSKR. 1138 to 1139 is a binding site for NADP(+); it reads NR. Low complexity-rich tracts occupy residues 1139–1148 and 1167–1177; these read RSAAPSRSTT and SASTTSMSAAA.

This sequence belongs to the HMG-CoA reductase family.

It is found in the endoplasmic reticulum membrane. It carries out the reaction (R)-mevalonate + 2 NADP(+) + CoA = (3S)-3-hydroxy-3-methylglutaryl-CoA + 2 NADPH + 2 H(+). It functions in the pathway metabolic intermediate biosynthesis; (R)-mevalonate biosynthesis; (R)-mevalonate from acetyl-CoA: step 3/3. Its function is as follows. HMG-CoA reductase; part of the first module of ergosterol biosynthesis pathway that includes the early steps of the pathway, conserved across all eukaryotes, and which results in the formation of mevalonate from acetyl-coenzyme A (acetyl-CoA). In this module, the cytosolic acetyl-CoA acetyltransferase catalyzes the formation of acetoacetyl-CoA. The hydroxymethylglutaryl-CoA synthase then condenses acetyl-CoA with acetoacetyl-CoA to form HMG-CoA. The rate-limiting step of the early module is the reduction to mevalonate by the 3-hydroxy-3-methylglutaryl-coenzyme A (HMG-CoA) reductase HMGR. This chain is 3-hydroxy-3-methylglutaryl-coenzyme A reductase (HMGR), found in Gibberella fujikuroi (strain CBS 195.34 / IMI 58289 / NRRL A-6831) (Bakanae and foot rot disease fungus).